The chain runs to 391 residues: 1-deoxy-D-xylulose 5-phosphate reductoisomerase (391 aa).

Positions 17, 18, 19, 20, 47, and 130 each coordinate NADPH. Residue K131 participates in 1-deoxy-D-xylulose 5-phosphate binding. E132 serves as a coordination point for NADPH. D156 serves as a coordination point for Mn(2+). S157, E158, S182, and H205 together coordinate 1-deoxy-D-xylulose 5-phosphate. Residue E158 coordinates Mn(2+). An NADPH-binding site is contributed by G211. Residues S218, N223, K224, and E227 each coordinate 1-deoxy-D-xylulose 5-phosphate. E227 serves as a coordination point for Mn(2+).

This sequence belongs to the DXR family. It depends on Mg(2+) as a cofactor. Mn(2+) is required as a cofactor.

The catalysed reaction is 2-C-methyl-D-erythritol 4-phosphate + NADP(+) = 1-deoxy-D-xylulose 5-phosphate + NADPH + H(+). It participates in isoprenoid biosynthesis; isopentenyl diphosphate biosynthesis via DXP pathway; isopentenyl diphosphate from 1-deoxy-D-xylulose 5-phosphate: step 1/6. Functionally, catalyzes the NADPH-dependent rearrangement and reduction of 1-deoxy-D-xylulose-5-phosphate (DXP) to 2-C-methyl-D-erythritol 4-phosphate (MEP). The polypeptide is 1-deoxy-D-xylulose 5-phosphate reductoisomerase (Sinorhizobium medicae (strain WSM419) (Ensifer medicae)).